The sequence spans 491 residues: Galactose-1-phosphate uridylyltransferase 1 (491 aa).

It belongs to the galactose-1-phosphate uridylyltransferase type 2 family.

The protein resides in the cytoplasm. The enzyme catalyses alpha-D-galactose 1-phosphate + UDP-alpha-D-glucose = alpha-D-glucose 1-phosphate + UDP-alpha-D-galactose. It participates in carbohydrate metabolism; galactose metabolism. The chain is Galactose-1-phosphate uridylyltransferase 1 (galT1) from Streptococcus pneumoniae serotype 4 (strain ATCC BAA-334 / TIGR4).